The following is a 157-amino-acid chain: MGIMLDETDKAILRDLQEDASISNLNLSKKIGLSPSACLARTKNLVEAGIIKKFTTIVDEKKLGIEVTALALINLSPLNRETIHSFLEDINKFPQVQECYTLTGSHDYMLKIVAKDMESYRNFIIDSLMQNPAISGVDTSIVMSTEKRTVSVPIDEM.

The HTH asnC-type domain occupies 5 to 66 (LDETDKAILR…IVDEKKLGIE (62 aa)). Residues 24 to 43 (NLNLSKKIGLSPSACLARTK) constitute a DNA-binding region (H-T-H motif).

Functionally, transcriptional repressor of the azlBCD operon involved in branched-chain amino acid transport. This is Transcriptional regulator AzlB (azlB) from Bacillus subtilis (strain 168).